A 398-amino-acid polypeptide reads, in one-letter code: Cholinephosphotransferase 1 (398 aa).

Ala2 bears the N-acetylalanine mark. Topologically, residues 2-62 are cytoplasmic; the sequence is AAGAGARPAP…LLQWIPLWMA (61 aa). Residues 63–83 traverse the membrane as a helical segment; that stretch reads PNTITLIGLAINLVTTLVLIF. Residue Asn64 participates in CDP-choline binding. Topologically, residues 84-93 are lumenal; that stretch reads YCPTVTEEAP. Residues 94–118 form a helical membrane-spanning segment; the sequence is YWTYLLCALGLFIYQSLDAIDGKQA. Mg(2+)-binding residues include Asp111 and Asp114. Position 119 (Arg119) interacts with CDP-choline. The Cytoplasmic segment spans residues 119–125; that stretch reads RRTNSCS. Residues 126–150 form a helical membrane-spanning segment; the sequence is PLGELFDHGCDSLSTVFMAIGASIA. Asp132 serves as a coordination point for Mg(2+). His133 serves as the catalytic Proton acceptor. Asp136 contributes to the Mg(2+) binding site. At 151–160 the chain is on the lumenal side; that stretch reads VRLGTHPDWL. Residues 161–179 traverse the membrane as a helical segment; it reads FFCSFVGMFMFYCAHWQTY. Residues 180–190 lie on the Cytoplasmic side of the membrane; the sequence is VSGVLRFGRVD. Residues 191–207 traverse the membrane as a helical segment; it reads VTEIQVALVIVFMLSTF. Topologically, residues 208–222 are lumenal; sequence GGATMWDYTIPILEI. Residues 223–248 traverse the membrane as a helical segment; that stretch reads KLKIVPVLGVVGGLIFSCSNYFHVIL. Topologically, residues 249 to 265 are cytoplasmic; sequence HGGVGKNGSTIAGTSVL. The helical transmembrane segment at 266-281 threads the bilayer; the sequence is SPGLHIGLIIILAIMI. Residues 282 to 293 are Lumenal-facing; sequence YKKSATNMFEKH. The helical transmembrane segment at 294–316 threads the bilayer; that stretch reads PCLYTLMFGCVFAKVAQKLVIAH. Residues 317 to 329 lie on the Cytoplasmic side of the membrane; that stretch reads MTKSELYLQDTVF. A helical transmembrane segment spans residues 330-339; it reads IGPGLLFLDQ. The Lumenal segment spans residues 340–346; that stretch reads YFNNFID. The chain crosses the membrane as a helical span at residues 347-376; the sequence is EYVVLWIAMVISSFDMMIYFTSLCLQISRH. Topologically, residues 377–398 are cytoplasmic; it reads LHLNIFKTSCQQAPEQVYKHID.

It belongs to the CDP-alcohol phosphatidyltransferase class-I family. It depends on Mg(2+) as a cofactor. Mn(2+) is required as a cofactor. Expressed in brain, heart, lung, liver, spleen, intestine and muscle. Down-regulated in kidney of type 2 diabetic KK/Ta mice.

Its subcellular location is the golgi apparatus membrane. It catalyses the reaction CDP-choline + a 1,2-diacyl-sn-glycerol = a 1,2-diacyl-sn-glycero-3-phosphocholine + CMP + H(+). It carries out the reaction 1-octadecanoyl-2-(5Z,8Z,11Z,14Z-eicosatetraenoyl)-sn-glycerol + CDP-choline = 1-octadecanoyl-2-(5Z,8Z,11Z,14Z-eicosatetraenoyl)-sn-glycero-3-phosphocholine + CMP + H(+). The enzyme catalyses 1-hexadecanoyl-2-(9Z-octadecenoyl)-sn-glycerol + CDP-choline = 1-hexadecanoyl-2-(9Z-octadecenoyl)-sn-glycero-3-phosphocholine + CMP + H(+). The catalysed reaction is 1-hexadecanoyl-2-(4Z,7Z,10Z,13Z,16Z,19Z-docosahexaenoyl)-sn-glycerol + CDP-choline = 1-hexadecanoyl-2-(4Z,7Z,10Z,13Z,16Z,19Z-docosahexaenoyl)-sn-glycero-3-phosphocholine + CMP + H(+). It catalyses the reaction 1,2-dioctanoyl-sn-glycerol + CDP-choline = 1,2-dioctanoyl-sn-glycero-3-phosphocholine + CMP + H(+). It participates in phospholipid metabolism; phosphatidylcholine biosynthesis; phosphatidylcholine from phosphocholine: step 2/2. In terms of biological role, catalyzes the final step of de novo phosphatidylcholine (PC) synthesis, i.e. the transfer of choline phosphate from CDP-choline to the free hydroxyl of a diacylglycerol (DAG), producing a PC. It thereby plays a central role in the formation and maintenance of vesicular membranes. The polypeptide is Cholinephosphotransferase 1 (Mus musculus (Mouse)).